The primary structure comprises 369 residues: Anhydro-N-acetylmuramic acid kinase (369 aa).

12–19 contributes to the ATP binding site; sequence GTSLDGVD.

The protein belongs to the anhydro-N-acetylmuramic acid kinase family.

The catalysed reaction is 1,6-anhydro-N-acetyl-beta-muramate + ATP + H2O = N-acetyl-D-muramate 6-phosphate + ADP + H(+). It functions in the pathway amino-sugar metabolism; 1,6-anhydro-N-acetylmuramate degradation. The protein operates within cell wall biogenesis; peptidoglycan recycling. Functionally, catalyzes the specific phosphorylation of 1,6-anhydro-N-acetylmuramic acid (anhMurNAc) with the simultaneous cleavage of the 1,6-anhydro ring, generating MurNAc-6-P. Is required for the utilization of anhMurNAc either imported from the medium or derived from its own cell wall murein, and thus plays a role in cell wall recycling. This Escherichia coli (strain SMS-3-5 / SECEC) protein is Anhydro-N-acetylmuramic acid kinase.